A 560-amino-acid polypeptide reads, in one-letter code: S100P-binding protein (560 aa).

2 disordered regions span residues 259–292 and 313–400; these read SDIP…ESTP and SSSS…GKSF. Residues 313-352 show a composition bias toward polar residues; the sequence is SSSSLQLPETSLASSTEPSPSLQLSASSVTAMNGQNNSNK. Residues 378–387 show a composition bias toward basic and acidic residues; sequence QKVEPKKNKP.

It is found in the nucleus. The chain is S100P-binding protein (s100pbp) from Xenopus laevis (African clawed frog).